Here is a 305-residue protein sequence, read N- to C-terminus: Methionyl-tRNA formyltransferase (305 aa).

111 to 114 is a binding site for (6S)-5,6,7,8-tetrahydrofolate; that stretch reads SLLP.

It belongs to the Fmt family.

The catalysed reaction is L-methionyl-tRNA(fMet) + (6R)-10-formyltetrahydrofolate = N-formyl-L-methionyl-tRNA(fMet) + (6S)-5,6,7,8-tetrahydrofolate + H(+). In terms of biological role, attaches a formyl group to the free amino group of methionyl-tRNA(fMet). The formyl group appears to play a dual role in the initiator identity of N-formylmethionyl-tRNA by promoting its recognition by IF2 and preventing the misappropriation of this tRNA by the elongation apparatus. This Campylobacter jejuni subsp. jejuni serotype O:6 (strain 81116 / NCTC 11828) protein is Methionyl-tRNA formyltransferase.